The following is a 276-amino-acid chain: MRRFFWLVAAALLLAGCAGEKGIVEKEGYQLDTRRQAQAAYPRIKVLVIHYTADDFDSSLATLTDKQVSSHYLVPAVPPRYNGKPRIWQLVPEQELAWHAGISAWRGATRLNDTSIGIELENRGWQKSAGVKYFAPFEPAQIQALIPLAKDIIARYHIKPENVVAHADIAPQRKDDPGPLFPWQQLAQQGIGAWPDAQRVNFYLAGRAPHTPVDTASLLELLARYGYDVKPDMTPREQRRVIMAFQMHFRPTLYNGEADAETQAIAEALLEKYGQD.

The first 16 residues, 1–16 (MRRFFWLVAAALLLAG), serve as a signal peptide directing secretion. Residue Cys17 is the site of N-palmitoyl cysteine attachment. Cys17 is lipidated: S-diacylglycerol cysteine. Positions 42-179 (PRIKVLVIHY…APQRKDDPGP (138 aa)) constitute an N-acetylmuramoyl-L-alanine amidase domain. His50 serves as a coordination point for Zn(2+). 51–52 (YT) serves as a coordination point for substrate. Glu119 (proton acceptor) is an active-site residue. The Zn(2+) site is built by His166 and Asp176.

It belongs to the N-acetylmuramoyl-L-alanine amidase 2 family. The cofactor is Zn(2+).

The protein localises to the cell outer membrane. The catalysed reaction is Hydrolyzes the link between N-acetylmuramoyl residues and L-amino acid residues in certain cell-wall glycopeptides.. The sequence is that of N-acetylmuramoyl-L-alanine amidase AmiD (amiD) from Escherichia coli (strain K12).